A 254-amino-acid chain; its full sequence is Allene oxide cyclase 1, chloroplastic (254 aa).

Residues 1-78 (MASSTISLQS…QNLGNTENPR (78 aa)) constitute a chloroplast transit peptide. Residues 44–56 (SNGPGSSSPTSFT) are compositionally biased toward low complexity. The segment at 44-79 (SNGPGSSSPTSFTPKKKLTPTRALSQNLGNTENPRP) is disordered. Residues 65–77 (RALSQNLGNTENP) are compositionally biased toward polar residues.

It belongs to the allene oxide cyclase family. As to expression, highly expressed in fully developed leaves.

It localises to the plastid. It is found in the chloroplast. It carries out the reaction (9Z,13S,15Z)-12,13-epoxyoctadeca-9,11,15-trienoate = (9S,13S,15Z)-12-oxophyto-10,15-dienoate. Involved in the production of 12-oxo-phytodienoic acid (OPDA), a precursor of jasmonic acid. This chain is Allene oxide cyclase 1, chloroplastic (AOC1), found in Arabidopsis thaliana (Mouse-ear cress).